We begin with the raw amino-acid sequence, 83 residues long: MALLDFFLSRKKNTANIAKERLQIIVAERRRMDTEPQYLPKLKKEIFQVICKYIKINPEKIKIQLDQTNKNISILELNVTLSE.

This sequence belongs to the MinE family.

Its function is as follows. Prevents the cell division inhibition by proteins MinC and MinD at internal division sites while permitting inhibition at polar sites. This ensures cell division at the proper site by restricting the formation of a division septum at the midpoint of the long axis of the cell. The sequence is that of Cell division topological specificity factor from Buchnera aphidicola subsp. Baizongia pistaciae (strain Bp).